Consider the following 128-residue polypeptide: Iron-sulfur cluster insertion protein ErpA (128 aa).

The iron-sulfur cluster site is built by cysteine 56, cysteine 120, and cysteine 122.

It belongs to the HesB/IscA family. In terms of assembly, homodimer. The cofactor is iron-sulfur cluster.

Required for insertion of 4Fe-4S clusters for at least IspG. The protein is Iron-sulfur cluster insertion protein ErpA of Xanthomonas campestris pv. campestris (strain 8004).